The following is a 439-amino-acid chain: 26S proteasome regulatory subunit 4 homolog (439 aa).

The segment at 1–46 (MGNNQSQGQGDKGEKKDQPKYQPPPPPTQFGKKKKRRGAETSTKLP) is disordered. Residue 225 to 232 (GEPGTGKT) coordinates ATP.

The protein belongs to the AAA ATPase family.

It localises to the cytoplasm. The protein resides in the nucleus. Its function is as follows. The 26S proteasome is involved in the ATP-dependent degradation of ubiquitinated proteins. The regulatory (or ATPase) complex confers ATP dependency and substrate specificity to the 26S complex. Plays an important role in regulating both growth and multicellular development. This chain is 26S proteasome regulatory subunit 4 homolog (psmC1), found in Dictyostelium discoideum (Social amoeba).